The primary structure comprises 41 residues: Large ribosomal subunit protein bL36 (41 aa).

The protein belongs to the bacterial ribosomal protein bL36 family.

This is Large ribosomal subunit protein bL36 from Sphingopyxis alaskensis (strain DSM 13593 / LMG 18877 / RB2256) (Sphingomonas alaskensis).